A 450-amino-acid chain; its full sequence is Bestrophin homolog 1 (450 aa).

Topologically, residues 1–31 are cytoplasmic; that stretch reads MTINYHKEIMTSHPWTFFLLLFKWKGSIWKA. A helical transmembrane segment spans residues 32–51; sequence VYMETIIFLICYGIISVIYK. Over 52 to 60 the chain is Extracellular; that stretch reads TAMGESSQR. Residues 61–82 traverse the membrane as a helical segment; that stretch reads TFESLVRYFDKRLSYIPLEFVL. Topologically, residues 83-242 are cytoplasmic; that stretch reads GFFVTTVVNR…DWVPLPLMYP (160 aa). A helical transmembrane segment spans residues 243–260; sequence QLVCLAVNLYFLVSIIAR. Over 261-278 the chain is Extracellular; sequence QLVIEKHKMVDEVDVYFP. The chain crosses the membrane as a helical span at residues 279-292; that stretch reads VMTFLQFIFYMGWL. The Cytoplasmic portion of the chain corresponds to 293–450; sequence KVIDVMLNPF…WKIPTNPQKF (158 aa). 3 residues coordinate Ca(2+): Asn-300, Asp-305, and Asp-308.

Belongs to the anion channel-forming bestrophin (TC 1.A.46) family. Calcium-sensitive chloride channel subfamily. As to quaternary structure, forms oligomers.

It is found in the cell membrane. The enzyme catalyses chloride(in) = chloride(out). In terms of biological role, ligand-gated anion channel that allows the movement of chloride monoatomic anions across cell membranes when activated by Calcium (Ca2+). In Caenorhabditis elegans, this protein is Bestrophin homolog 1 (best-1).